The primary structure comprises 143 residues: Beta/delta-urticatoxin-Uf2a (143 aa).

A signal peptide spans 1 to 18; sequence MGAIVLVALMALVASSSA. Residues 19–80 constitute a propeptide that is removed on maturation; it reads FSDIEHNIMK…MMLSGRPQPN (62 aa). Disulfide bonds link Cys83–Cys100, Cys90–Cys105, Cys99–Cys113, Cys115–Cys129, Cys122–Cys134, and Cys128–Cys142.

The protein belongs to the urticatoxin-2 family. In terms of tissue distribution, expressed in trichomes, that are stiff epidermal hairs located on the surface of petioles and leaves.

Its subcellular location is the secreted. Functionally, plant defense neurotoxin that causes pain and systemic symptoms in mammals via modulation of voltage-gated sodium channels (Nav). Potent modulator of human Nav1.5/SCN5A (EC(50)=55 nM), Nav1.6/SCN8A (EC(50)=0.86 nM), and Nav1.7/SCN9A (EC(50)=208 nM), where it shifts the activation threshold to more negative potentials and delays fast inactivation. Also shifts the voltage-dependence of steady-state fast inactivation of Nav1.6/SCN8A, but not that of Nav1.5/SCN5A or Nav1.7/SCN9A. On Nav1.7/SCN9A, principally acts by binding to extracellular loops of domain IV (Nav site 3). Does not affect current response of the tetrodotoxin (TTX)-resistant Nav1.8/SCN10A sodium channel. In vivo, intraplantar injection into mice causes numerous dose-dependent, immediate, and long-lasting spontaneous pain behaviors, while no swelling is observed in the injected paw. At the highest doses tested, systemic symptoms including hypokinesia and hypersalivation are observed. The sequence is that of Beta/delta-urticatoxin-Uf2a from Urtica ferox (Tree nettle).